The primary structure comprises 225 residues: MPDIQPITVYGKGGPNPPRVAIILAELDLPHKVIEVPLSKVKEPDYVAINPNGRIPAIYDPNTDLTLWESGAIVEYLVSHYDPDHRISFPAGSNLAALATQWLFFQASGQGPYYGQASWFKKFHHEKVPSAIERYVKEINRVTGVLEGHLSRQKVAADGDGPWLVGGKCSFADLAWIPWQVIVTAIIQPEDGYTVEDYPHVKNWLDRMMARPGVQKGMADIFPST.

Positions 4 to 85 (IQPITVYGKG…YLVSHYDPDH (82 aa)) constitute a GST N-terminal domain. Residues 92–225 (GSNLAALATQ…KGMADIFPST (134 aa)) enclose the GST C-terminal domain.

It belongs to the GST superfamily. As to expression, specifically expressed in conidia.

It participates in secondary metabolite biosynthesis. Glutathione S-transferase-like protein; part of the gene cluster that mediates the biosynthesis of trypacidin, a mycotoxin with antiprotozoal activity and that plays a role in the infection process. The pathway begins with the synthesis of atrochrysone thioester by the polyketide synthase (PKS) tpcC. The atrochrysone carboxyl ACP thioesterase tpcB then breaks the thioester bond and releases the atrochrysone carboxylic acid from tpcC. The decarboxylase tpcK converts atrochrysone carboxylic acid to atrochrysone which is further reduced into emodin anthrone. The next step is performed by the emodin anthrone oxygenase tpcL that catalyzes the oxidation of emodinanthrone to emodin. Emodin O-methyltransferase encoded by tpcA catalyzes methylation of the 8-hydroxy group of emodin to form questin. Ring cleavage of questin by questin oxidase tpcI leads to desmethylsulochrin via several intermediates including questin epoxide. Another methylation step catalyzed by tpcM leads to the formation of sulochrin which is further converted to monomethylsulfochrin by tpcH. Finally, the tpcJ catalyzes the conversion of monomethylsulfochrin to trypacidin. Trypacidin is toxic for human pulmonary and bronchial epithelial cells by initiating the intracellular formation of nitric oxide (NO) and hydrogen peroxide (H(2)O(2)), thus triggering host necrotic cell death. The trypacidin pathway is also able to produce endocrocin via a distinct route from the endocrocin Enc pathway. This chain is Glutathione S-transferase-like protein tpcF, found in Aspergillus fumigatus (strain ATCC MYA-4609 / CBS 101355 / FGSC A1100 / Af293) (Neosartorya fumigata).